The following is a 171-amino-acid chain: Ribosome maturation factor RimM (171 aa).

In terms of domain architecture, PRC barrel spans 96 to 168 (EDGFYDHELE…TATITPPEGL (73 aa)).

This sequence belongs to the RimM family. Binds ribosomal protein uS19.

The protein resides in the cytoplasm. An accessory protein needed during the final step in the assembly of 30S ribosomal subunit, possibly for assembly of the head region. Essential for efficient processing of 16S rRNA. May be needed both before and after RbfA during the maturation of 16S rRNA. It has affinity for free ribosomal 30S subunits but not for 70S ribosomes. The sequence is that of Ribosome maturation factor RimM from Corynebacterium glutamicum (strain ATCC 13032 / DSM 20300 / JCM 1318 / BCRC 11384 / CCUG 27702 / LMG 3730 / NBRC 12168 / NCIMB 10025 / NRRL B-2784 / 534).